The following is a 218-amino-acid chain: Small ribosomal subunit protein uS3c (218 aa).

Residues 47-118 (VQKNIRISSG…KLNIAITRIS (72 aa)) form the KH type-2 domain.

Belongs to the universal ribosomal protein uS3 family. Part of the 30S ribosomal subunit.

It is found in the plastid. It localises to the chloroplast. This chain is Small ribosomal subunit protein uS3c (rps3), found in Barbarea verna (Land cress).